The primary structure comprises 164 residues: MAPRSSTSKSATREKKDHKKAPIKKAIAKKDTKPTPTKGKAASASTTPVKKDVTPVKADTKKKIHKTKTMKETVSDAKKTVHAAAGDKKLSKKRPAKEAAKKAINPGKKAAAQPKSTKKEVKKDNKTAKKETKKDHKPAKKEAKKETKPAKKDAKKSSKPAKKN.

Positions 1–10 (MAPRSSTSKS) are enriched in polar residues. The tract at residues 1-164 (MAPRSSTSKS…KKSSKPAKKN (164 aa)) is disordered. A compositionally biased stretch (basic residues) spans 16–27 (KDHKKAPIKKAI). A phosphothreonine mark is found at threonine 47 and threonine 54. Composition is skewed to basic and acidic residues over residues 49-61 (VKKD…ADTK), 69-89 (TMKE…GDKK), and 117-156 (TKKE…DAKK).

In terms of processing, cell-growth/division-associated phosphorylation by a CDC2-like kinase.

It localises to the nucleus. Its subcellular location is the chromosome. Functionally, histones H1 are necessary for the condensation of nucleosome chains into higher-order structures. This Tetrahymena thermophila (strain SB210) protein is Histone H1 (HHO).